A 275-amino-acid chain; its full sequence is Anamorsin homolog (275 aa).

An N-terminal SAM-like domain region spans residues 1–147 (MTSASIHIGS…QSASSAAATG (147 aa)). A linker region spans residues 148–183 (RINLGGAKTKVKLSLDDDDDDQLIDEDDLLNGGGGM). Residues Cys-203, Cys-209, Cys-212, and Cys-214 each contribute to the [2Fe-2S] cluster site. Positions 203–214 (CGGRKACDNCTC) are fe-S binding site A. Positions 238, 241, 249, and 252 each coordinate [4Fe-4S] cluster. 2 consecutive short sequence motifs (cx2C motif) follow at residues 238-241 (CGNC) and 249-252 (CAGC). Positions 238–252 (CGNCAKGDAFRCAGC) are fe-S binding site B.

The protein belongs to the anamorsin family. As to quaternary structure, monomer. [2Fe-2S] cluster serves as cofactor. The cofactor is [4Fe-4S] cluster.

It is found in the cytoplasm. It localises to the mitochondrion intermembrane space. Its function is as follows. Component of the cytosolic iron-sulfur (Fe-S) protein assembly (CIA) machinery. Required for the maturation of extramitochondrial Fe-S proteins. Part of an electron transfer chain functioning in an early step of cytosolic Fe-S biogenesis, facilitating the de novo assembly of a [4Fe-4S] cluster on the cytosolic Fe-S scaffold complex. Electrons are transferred from NADPH via a FAD- and FMN-containing diflavin oxidoreductase. Together with the diflavin oxidoreductase, also required for the assembly of the diferric tyrosyl radical cofactor of ribonucleotide reductase (RNR), probably by providing electrons for reduction during radical cofactor maturation in the catalytic small subunit. The chain is Anamorsin homolog from Thalassiosira pseudonana (Marine diatom).